The following is a 416-amino-acid chain: Putative competence-damage inducible protein (416 aa).

This sequence belongs to the CinA family.

The chain is Putative competence-damage inducible protein from Levilactobacillus brevis (strain ATCC 367 / BCRC 12310 / CIP 105137 / JCM 1170 / LMG 11437 / NCIMB 947 / NCTC 947) (Lactobacillus brevis).